Reading from the N-terminus, the 982-residue chain is MASKESKPSRTTWRDMEPPLRETWNQVLQELVKRQQQEEEEQQGLVSGKKKSWVSIDLLGTEGKDIKKVNIWEPCEKWFAQVVWGVLWVLQIVLWGCLMWEVRKGNQCQAEEVIALVSDPGGFQRVQHVETVPVTCVTKNFTQWGCQPEGAYPDPELEYRNISREILEEVYKQDWPWNTYHWPLWQMENMRQWMKENEKEYKERTNKTKEDIDDLVAGRIRGRFCVPYPYALLRCEEWCWYPESINQETGHAEKIKINCTKAKAVSCTEKMPLAAVQRVYWEKEDEESMKFLNIKACNISLRCQDEGKSPGGCVQGYPIPKGAEIIPEAMKYLRGKKSRYGGIKDKNGELKLPLSVRVWVRMANLSGWVNGTPPYWSARINGSTGINGTRWYGVGTLHHLGYNISSNPEGGICNFTGELWIGGDRFPYYYKPSWNCSQNWTGHPVWHVFRYLDMTEHMTSRCIQRPKRHNITVGNGTITGNCSVTNWDGCNCTRSGNHLYNSTSGGLLVIICRQNSTITGIMGTNTNWTTMWNIYQNCSRCNNSSLDRTGSGTLGTVNNLKCSLPHRNESNKWTCKSQRDSYIAGRDFWGKVKAKYSCESNLGGLDSMMHQQMLLQRYQVIRVRAYTYGVVEMPQSYMEERGENRRSRRNLQRKKRGIGLVIVLAIMAIIAAAGAGLGVANAVQQSYTRTAVQSLANATAAQQEVLEASYAMVQHIAKGIRILEARVARVEALVDMMVYQELDCWHYQHYCVTSTRSEVANYVNWTRFKDNCTWQQWEEEIEQHEGNLSLLLREAALQVHIAQRDARRIPDAWKAIQEAFNWSSWFSWLKYIPWIIMGIVGLMCFRILMCVISMCLQAYKQVKQIRYTQVTVVIEAPVELEEKQKRNGDGTNGCASLEHERRTSHRSFIQIWRATWWAWKTSPWRHNWRTMPYITLLPILVIWQWMEENGWNGENQHKKKKERVDCQDREQMPTLENDYVEL.

The first 106 residues, 1–106 (MASKESKPSR…CLMWEVRKGN (106 aa)), serve as a signal peptide directing secretion. Residues 107-831 (QCQAEEVIAL…WSSWFSWLKY (725 aa)) are Extracellular-facing. Asparagine 140, asparagine 161, asparagine 206, asparagine 258, asparagine 298, asparagine 364, asparagine 381, asparagine 387, asparagine 403, asparagine 414, asparagine 435, asparagine 439, asparagine 470, asparagine 475, asparagine 481, asparagine 491, asparagine 501, asparagine 515, asparagine 527, asparagine 537, asparagine 542, asparagine 543, and asparagine 568 each carry an N-linked (GlcNAc...) asparagine; by host glycan. Residues 657-677 (GIGLVIVLAIMAIIAAAGAGL) are fusion peptide. Positions 689–738 (RTAVQSLANATAAQQEVLEASYAMVQHIAKGIRILEARVARVEALVDMMV) form a coiled coil. An N-linked (GlcNAc...) asparagine; by host glycan is attached at asparagine 697. Positions 723–738 (LEARVARVEALVDMMV) are immunosuppression. 4 N-linked (GlcNAc...) asparagine; by host glycosylation sites follow: asparagine 764, asparagine 771, asparagine 787, and asparagine 821. Residues 779–814 (EEIEQHEGNLSLLLREAALQVHIAQRDARRIPDAWK) adopt a coiled-coil conformation. A helical transmembrane segment spans residues 832-852 (IPWIIMGIVGLMCFRILMCVI). The Cytoplasmic portion of the chain corresponds to 853–982 (SMCLQAYKQV…PTLENDYVEL (130 aa)). Residue cysteine 855 is the site of S-palmitoyl cysteine; by host attachment.

The mature envelope protein (Env) consists of a trimer of SU-TM heterodimers attached by noncovalent interactions or by a labile interchain disulfide bond. Specific enzymatic cleavages in vivo yield mature proteins. Envelope glycoproteins are synthesized as an inactive precursor that is N-glycosylated and processed likely by host cell furin or by a furin-like protease in the Golgi to yield the mature SU and TM proteins. The cleavage site between SU and TM requires the minimal sequence [KR]-X-[KR]-R. In terms of processing, the transmembrane protein is palmitoylated.

The protein resides in the virion membrane. Its subcellular location is the host cell membrane. Its function is as follows. The surface protein (SU) attaches the virus to the host cell by binding to its receptor. This interaction triggers the refolding of the transmembrane protein (TM) and is thought to activate its fusogenic potential by unmasking its fusion peptide. Fusion occurs at the host cell plasma membrane. The transmembrane protein (TM) acts as a class I viral fusion protein. Under the current model, the protein has at least 3 conformational states: pre-fusion native state, pre-hairpin intermediate state, and post-fusion hairpin state. During viral and target cell membrane fusion, the coiled coil regions (heptad repeats) assume a trimer-of-hairpins structure, positioning the fusion peptide in close proximity to the C-terminal region of the ectodomain. The formation of this structure appears to drive apposition and subsequent fusion of viral and target cell membranes. Membranes fusion leads to delivery of the nucleocapsid into the cytoplasm. The chain is Envelope glycoprotein gp160 (env) from Maedi visna virus (strain 1514) (MVV).